Reading from the N-terminus, the 982-residue chain is Presequence protease, mitochondrial (982 aa).

Residues 1 to 7 (MFQIRNY) constitute a mitochondrion transit peptide. Position 84 (H84) interacts with Zn(2+). E87 serves as the catalytic Proton acceptor. H88 serves as a coordination point for Zn(2+). E160 is an active-site residue. E185 contributes to the Zn(2+) binding site.

The protein belongs to the peptidase M16 family. PreP subfamily. Monomer and homodimer; homodimerization is induced by binding of the substrate. It depends on Zn(2+) as a cofactor.

It localises to the mitochondrion intermembrane space. The protein resides in the mitochondrion matrix. Its function is as follows. Degrades mitochondrial transit peptides after their cleavage in the intermembrane space or in the matrix, and presequence peptides; clearance of these peptides is required to keep the presequence processing machinery running. Preferentially cleaves the N-terminal side of paired basic amino acid residues. Also degrades other unstructured peptides. May function as an ATP-dependent peptidase as opposed to a metalloendopeptidase. The chain is Presequence protease, mitochondrial (CYM1) from Kluyveromyces lactis (strain ATCC 8585 / CBS 2359 / DSM 70799 / NBRC 1267 / NRRL Y-1140 / WM37) (Yeast).